We begin with the raw amino-acid sequence, 241 residues long: Glutamate/aspartate import ATP-binding protein GltL (241 aa).

Residues 2–236 (ITLKNVSKWY…PKSDRAKDFL (235 aa)) form the ABC transporter domain. 34-41 (GPSGSGKS) serves as a coordination point for ATP.

It belongs to the ABC transporter superfamily. The complex is composed of two ATP-binding proteins (GltL), two transmembrane proteins (GltJ and GltK) and a solute-binding protein (GltI).

The protein localises to the cell inner membrane. The enzyme catalyses a polar amino acid(out) + ATP + H2O = a polar amino acid(in) + ADP + phosphate + H(+). The catalysed reaction is L-glutamate(out) + ATP + H2O = L-glutamate(in) + ADP + phosphate + H(+). It catalyses the reaction L-aspartate(out) + ATP + H2O = L-aspartate(in) + ADP + phosphate + H(+). Part of the ABC transporter complex GltIJKL involved in glutamate and aspartate uptake. Probably responsible for energy coupling to the transport system. The protein is Glutamate/aspartate import ATP-binding protein GltL (gltL) of Escherichia coli O157:H7.